Here is a 299-residue protein sequence, read N- to C-terminus: Protoheme IX farnesyltransferase 1 (299 aa).

9 helical membrane-spanning segments follow: residues 24 to 44 (VVAL…PGVP), 46 to 66 (AAVV…AAMV), 97 to 117 (LLVA…CCNA), 118 to 138 (LTAW…TLLL), 146 to 166 (IVIG…AVNG), 170 to 190 (AFAL…FWAL), 217 to 237 (LSIV…VALG), 239 to 259 (AGAI…FLAV), and 278 to 298 (IWYL…LIPL).

The protein belongs to the UbiA prenyltransferase family. Protoheme IX farnesyltransferase subfamily.

The protein localises to the cell inner membrane. It carries out the reaction heme b + (2E,6E)-farnesyl diphosphate + H2O = Fe(II)-heme o + diphosphate. It functions in the pathway porphyrin-containing compound metabolism; heme O biosynthesis; heme O from protoheme: step 1/1. Converts heme B (protoheme IX) to heme O by substitution of the vinyl group on carbon 2 of heme B porphyrin ring with a hydroxyethyl farnesyl side group. This is Protoheme IX farnesyltransferase 1 from Chromobacterium violaceum (strain ATCC 12472 / DSM 30191 / JCM 1249 / CCUG 213 / NBRC 12614 / NCIMB 9131 / NCTC 9757 / MK).